The chain runs to 41 residues: Large ribosomal subunit protein bL36 (41 aa).

This sequence belongs to the bacterial ribosomal protein bL36 family.

The chain is Large ribosomal subunit protein bL36 from Sphingopyxis alaskensis (strain DSM 13593 / LMG 18877 / RB2256) (Sphingomonas alaskensis).